The following is a 280-amino-acid chain: Ribosomal RNA small subunit methyltransferase A (280 aa).

Residues Asn28, Leu30, Gly55, Glu77, Asp103, and Asn122 each contribute to the S-adenosyl-L-methionine site.

This sequence belongs to the class I-like SAM-binding methyltransferase superfamily. rRNA adenine N(6)-methyltransferase family. RsmA subfamily.

It localises to the cytoplasm. It carries out the reaction adenosine(1518)/adenosine(1519) in 16S rRNA + 4 S-adenosyl-L-methionine = N(6)-dimethyladenosine(1518)/N(6)-dimethyladenosine(1519) in 16S rRNA + 4 S-adenosyl-L-homocysteine + 4 H(+). Specifically dimethylates two adjacent adenosines (A1518 and A1519) in the loop of a conserved hairpin near the 3'-end of 16S rRNA in the 30S particle. May play a critical role in biogenesis of 30S subunits. This Roseobacter denitrificans (strain ATCC 33942 / OCh 114) (Erythrobacter sp. (strain OCh 114)) protein is Ribosomal RNA small subunit methyltransferase A.